Here is a 170-residue protein sequence, read N- to C-terminus: Myelin-associated oligodendrocyte basic protein (170 aa).

The segment at 69–170 (SRRATSPQKP…GSPTRAPRFW (102 aa)) is disordered. A compositionally biased stretch (low complexity) spans 82-92 (PAASPVVVRAP). Phosphoserine occurs at positions 85, 98, and 107. Repeat unit 1 spans residues 93 to 101 (PAKPKSPPR). Over residues 93 to 114 (PAKPKSPPRPAKPRSPPIPAKP) the composition is skewed to pro residues. Residues 93–119 (PAKPKSPPRPAKPRSPPIPAKPRSPSR) form a 3 X 9 AA approximate tandem repeats region. A 2; half-length repeat occupies 105 to 110 (PRSPPI). Copy 3 of the repeat occupies 111-119 (PAKPRSPSR). Basic and acidic residues predominate over residues 118–130 (SRTERQPRPRPEV). Residues 138 to 151 (KPPQKSKQPARSSP) are compositionally biased toward low complexity.

As to expression, expressed predominantly in oligodendrocytes, in CNS myelin of the cerebrum and spinal cord. No expression seen in sciatic nerve.

The protein resides in the cytoplasm. It localises to the perinuclear region. May play a role in compacting or stabilizing the myelin sheath, possibly by binding the negatively charged acidic phospholipids of the cytoplasmic membrane. The protein is Myelin-associated oligodendrocyte basic protein (Mobp) of Rattus norvegicus (Rat).